We begin with the raw amino-acid sequence, 294 residues long: 4-hydroxy-tetrahydrodipicolinate synthase (294 aa).

Threonine 46 lines the pyruvate pocket. Tyrosine 134 acts as the Proton donor/acceptor in catalysis. The Schiff-base intermediate with substrate role is filled by lysine 163. Isoleucine 205 is a binding site for pyruvate.

Belongs to the DapA family. Homotetramer; dimer of dimers.

The protein resides in the cytoplasm. The catalysed reaction is L-aspartate 4-semialdehyde + pyruvate = (2S,4S)-4-hydroxy-2,3,4,5-tetrahydrodipicolinate + H2O + H(+). Its pathway is amino-acid biosynthesis; L-lysine biosynthesis via DAP pathway; (S)-tetrahydrodipicolinate from L-aspartate: step 3/4. In terms of biological role, catalyzes the condensation of (S)-aspartate-beta-semialdehyde [(S)-ASA] and pyruvate to 4-hydroxy-tetrahydrodipicolinate (HTPA). This chain is 4-hydroxy-tetrahydrodipicolinate synthase, found in Clostridium tetani (strain Massachusetts / E88).